Consider the following 92-residue polypeptide: Alpha-conotoxin-like Rt20.1 (92 aa).

A signal peptide spans 1 to 24; it reads MPKLEMMLLVLLILPLSYFSAAGG. Positions 25-45 are excised as a propeptide; the sequence is QVVQGDLRSDVLARYLQRGDR. Glutamate 49 carries the 4-carboxyglutamate modification. Proline 55 carries the post-translational modification 4-hydroxyproline. Cystine bridges form between cysteine 63–cysteine 72, cysteine 68–cysteine 80, cysteine 73–cysteine 90, and cysteine 78–cysteine 92.

Belongs to the conotoxin D superfamily. As to quaternary structure, hetero-, homo- or pseudo-homodimer (identical sequence, different post-translational modifications). In terms of tissue distribution, expressed by the venom duct.

The protein resides in the secreted. Its function is as follows. Alpha-conotoxins act on postsynaptic membranes, they bind to the nicotinic acetylcholine receptors (nAChR) and thus inhibit them. Through its two C-terminal domains, this homodimeric protein would bind to two nAChR allosteric sites, located outside the nAChR C-loop of the principal binding face and at the adjacent binding interface in a clockwise direction. This toxin specifically blocks mammalian neuronal nAChR of the alpha-7/CHRNA7, alpha-3-beta-2/CHRNA3-CHRNB2 and alpha-4-beta-2/CHRNA4-CHRNB2 subtypes. This Conus rattus (Rat cone) protein is Alpha-conotoxin-like Rt20.1.